The primary structure comprises 546 residues: Glucose-6-phosphate isomerase (546 aa).

Glu352 acts as the Proton donor in catalysis. Catalysis depends on residues His383 and Lys511.

This sequence belongs to the GPI family.

The protein localises to the cytoplasm. It carries out the reaction alpha-D-glucose 6-phosphate = beta-D-fructose 6-phosphate. Its pathway is carbohydrate biosynthesis; gluconeogenesis. It participates in carbohydrate degradation; glycolysis; D-glyceraldehyde 3-phosphate and glycerone phosphate from D-glucose: step 2/4. Catalyzes the reversible isomerization of glucose-6-phosphate to fructose-6-phosphate. This Paramagnetospirillum magneticum (strain ATCC 700264 / AMB-1) (Magnetospirillum magneticum) protein is Glucose-6-phosphate isomerase.